The primary structure comprises 347 residues: N-acetyl-gamma-glutamyl-phosphate reductase (347 aa).

Cysteine 153 is an active-site residue.

The protein belongs to the NAGSA dehydrogenase family. Type 1 subfamily.

Its subcellular location is the cytoplasm. It carries out the reaction N-acetyl-L-glutamate 5-semialdehyde + phosphate + NADP(+) = N-acetyl-L-glutamyl 5-phosphate + NADPH + H(+). It functions in the pathway amino-acid biosynthesis; L-arginine biosynthesis; N(2)-acetyl-L-ornithine from L-glutamate: step 3/4. In terms of biological role, catalyzes the NADPH-dependent reduction of N-acetyl-5-glutamyl phosphate to yield N-acetyl-L-glutamate 5-semialdehyde. This is N-acetyl-gamma-glutamyl-phosphate reductase from Mycobacterium avium (strain 104).